The chain runs to 305 residues: Aurasperone B biosynthesis cluster protein A (305 aa).

The signal sequence occupies residues 1–26 (MSIFFSIRFWPAAISAAILWLPQVLG). Asparagine 29, asparagine 34, asparagine 64, asparagine 83, asparagine 132, asparagine 183, asparagine 218, and asparagine 288 each carry an N-linked (GlcNAc...) asparagine glycan.

This sequence belongs to the bfoA family.

Its function is as follows. Part of the gene cluster that mediates the biosynthesis of aurasperone B, a dimeric gamma-naphthopyrone. The first step in the biosynthesis of aurasperone B is the production of gamma-naphthopyrone precursor YWA1 by the non-reducing polyketide synthase albA, via condensation of one acetyl-CoA starter unit with 6 malonyl-CoA units. YWA1 is then methylated by aunE at position C-6 to yield foncesin which is further methylated at position C-8 by aunD to produce fonsecin B. A key enzyme in the biosynthetic pathway is the cytochrome P450 monooxygenase aunB which catalyzes the oxidative dimerization of fonsecin B to aurasperone B. AunB also catalyzes the oxidative dimerization of rubrofusarin B into aurasperone A. The chain is Aurasperone B biosynthesis cluster protein A from Aspergillus niger (strain ATCC MYA-4892 / CBS 513.88 / FGSC A1513).